Here is a 647-residue protein sequence, read N- to C-terminus: TNFAIP3-interacting protein 1 (647 aa).

Residues 39-72 (MQGIKMLGELLEESQMEASRLRQKAEELVKDSEL) are a coiled coil. Basic and acidic residues predominate over residues 61-71 (QKAEELVKDSE). Residues 61–168 (QKAEELVKDS…DLGPPPPEDS (108 aa)) form a disordered region. At S77 the chain carries Phosphoserine. Positions 95–425 (TKVQVHPATS…SPLTRQREYQ (331 aa)) are interaction with Nef. The segment covering 102–115 (ATSTAATTTATATT) has biased composition (low complexity). The segment covering 143-155 (EEQNSPETGSHPT) has biased composition (polar residues). The stretch at 209–270 (SKVHKNEQRT…KKLLMNSSCK (62 aa)) forms a coiled coil. Residues S297, S416, and S455 each carry the phosphoserine modification. Residues 311-551 (AAEKKVKLLE…KASGERYHME (241 aa)) adopt a coiled-coil conformation. Residues 444 to 601 (ASPSSPPAAF…MEHPPPHPNS (158 aa)) are required for inhibitory activity of TNF-induced NF-kappa-B activation. The tract at residues 465–523 (KQELVTQNELLKQQVKIFEEDFQRERSDRERMNEEKEELKKQVEKLQAQVTLTNAQLKT) is ubiquitin-binding domain (UBD). The Nuclear localization signal signature appears at 537 to 543 (QKRKAKA). The residue at position 565 (Y565) is a Phosphotyrosine. Residue R584 is modified to Asymmetric dimethylarginine. R612 carries the post-translational modification Asymmetric dimethylarginine; alternate. Residue R612 is modified to Omega-N-methylarginine; alternate. The interval 613–647 (PPCAGIRNQSSQVMDPPPDRPAEPESADNDCDGPQ) is disordered. Residues 637–647 (ESADNDCDGPQ) show a composition bias toward acidic residues. Position 638 is a phosphoserine (S638).

In terms of assembly, interacts with TNFAIP3 and IKBKG (polyubiquitinated); facilitates TNFAIP3-mediated de-ubiquitination of NEMO/IKBKG. Interacts with polyubiquitin. Interacts with MAPK1, SELPLG and PIK3CD. Interacts with IRAK1 (polyubiquitinated). Interacts with MYD88; the interaction is indicative for participation in an activated TLR-signaling complex. Interacts with TAX1BP1. Post-translationally, phosphorylation at Tyr-565 by SRC-family kinases recruits phosphoinositide-3-kinase (PI3K) PIK3CD:p85 heterodimer which results in integrin activation and leukocyte adhesion to activated endothelium during inflammation. As to expression, ubiquitous. Abundant in heart and skeletal muscle and expressed at lower levels in thymus, liver, kidney, brain and intestinal tract.

The protein resides in the cytoplasm. It localises to the nucleus. Inhibits NF-kappa-B activation and TNF-induced NF-kappa-B-dependent gene expression by regulating TAX1BP1 and A20/TNFAIP3-mediated deubiquitination of IKBKG; proposed to link A20/TNFAIP3 to ubiquitinated IKBKG. Involved in regulation of EGF-induced ERK1/ERK2 signaling pathway; blocks MAPK3/MAPK1 nuclear translocation and MAPK1-dependent transcription. Increases cell surface CD4(T4) antigen expression. Involved in the anti-inflammatory response of macrophages and positively regulates TLR-induced activation of CEBPB. Involved in the prevention of autoimmunity; this function implicates binding to polyubiquitin. Involved in leukocyte integrin activation during inflammation; this function is mediated by association with SELPLG and dependent on phosphorylation by SRC-family kinases. In Mus musculus (Mouse), this protein is TNFAIP3-interacting protein 1 (Tnip1).